We begin with the raw amino-acid sequence, 196 residues long: Thymidylate kinase (196 aa).

7–14 (GIDGSGKT) is an ATP binding site.

This sequence belongs to the thymidylate kinase family.

It carries out the reaction dTMP + ATP = dTDP + ADP. In terms of biological role, phosphorylation of dTMP to form dTDP in both de novo and salvage pathways of dTTP synthesis. The sequence is that of Thymidylate kinase from Wolbachia pipientis wMel.